The following is a 319-amino-acid chain: HTH-type transcriptional regulator YidZ (319 aa).

An HTH lysR-type domain is found at 8 to 65 (LDLNLLLCLQLLMQERSVTKAAKRMNVTPSAVSKSLAKLRAWFDDPLFVNTPLGLAPT). A DNA-binding region (H-T-H motif) is located at residues 25–44 (VTKAAKRMNVTPSAVSKSLA).

It belongs to the LysR transcriptional regulatory family.

Its function is as follows. Involved in anaerobic NO protection. The polypeptide is HTH-type transcriptional regulator YidZ (Salmonella agona (strain SL483)).